Reading from the N-terminus, the 548-residue chain is Malate:quinone oxidoreductase (548 aa).

A disordered region spans residues 521–548; the sequence is DKPQAADSTPKPQLKPQPVQKEVADIAL. The span at 530 to 541 shows a compositional bias: low complexity; sequence PKPQLKPQPVQK.

This sequence belongs to the MQO family. Requires FAD as cofactor.

The catalysed reaction is (S)-malate + a quinone = a quinol + oxaloacetate. The protein operates within carbohydrate metabolism; tricarboxylic acid cycle; oxaloacetate from (S)-malate (quinone route): step 1/1. In Escherichia coli (strain K12), this protein is Malate:quinone oxidoreductase (mqo).